Consider the following 7524-residue polypeptide: Mucin-19 (7524 aa).

The signal sequence occupies residues 1–20; the sequence is MKLILLYLAVVLCFVGKGAA. The tract at residues 20–47 is disordered; it reads ARSPTTTRTPTPSTSEKASHVPEATPTY. The span at 21-34 shows a compositional bias: low complexity; it reads RSPTTTRTPTPSTS. Residues 55–225 enclose the VWFD 1 domain; sequence GEATMWGKDK…VCEDGVQYCD (171 aa). A disulfide bond links Cys79 and Cys224. One can recognise a TIL domain in the interval 298–353; the sequence is CPGKHIYKECGPSNPPTCSNVAPFQDSECVSGCTCPEGYLLDDIGEKGKCVLKEKC. VWFD domains are found at residues 392–568 and 851–1025; these read GICK…EGSP and STCH…QECS. 6 disulfide bridges follow: Cys394-Cys529, Cys434-Cys442, Cys853-Cys989, Cys875-Cys1024, Cys884-Cys986, and Cys900-Cys907. A compositionally biased stretch (low complexity) spans 1244 to 1261; the sequence is AAATRASSSTSGSVETSV. 2 disordered regions span residues 1244-7217 and 7249-7297; these read AAAT…SSLA and SVIK…CPDS. Positions 1262–1289 are enriched in polar residues; the sequence is PATTSTSKAQAHITTASSTETSALNSTA. Composition is skewed to low complexity over residues 1320 to 7099 and 7112 to 7217; these read PAVS…AGSG and STSG…SSLA. 36 repeat units span residues 1321–1483, 1484–1646, 1647–1809, 1810–1972, 1973–2135, 2136–2298, 2299–2461, 2462–2624, 2625–2787, 2788–2950, 2951–3113, 3114–3276, 3277–3439, 3440–3602, 3603–3765, 3766–3928, 3929–4091, 4092–4254, 4255–4417, 4418–4580, 4581–4743, 4744–4906, 4907–5069, 5070–5232, 5233–5395, 5396–5558, 5559–5721, 5722–5884, 5885–6047, 6048–6210, 6211–6373, 6374–6536, 6537–6699, 6700–6862, 6863–7025, and 7026–7188. The interval 1321-7188 is approximate repeats; that stretch reads AVSTTSAGST…AETAGSTTGP (5868 aa). Residues 7261–7291 are compositionally biased toward polar residues; sequence AKSNETTGRTTSMPASTSVAPGVTTSPNISQ. VWFC domains follow at residues 7302-7368 and 7370-7432; these read PVCH…GHCE and RTCL…YKCK. Disulfide bonds link Cys7435/Cys7482, Cys7449/Cys7496, Cys7458/Cys7512, and Cys7462/Cys7514. The CTCK domain occupies 7435 to 7519; sequence CRTTPVNVTV…TTCSCRDQCE (85 aa).

In terms of tissue distribution, specifically expressed in sublingual salivary glands. Expressed by mucous cells of the submandibular gland and submucosal gland of the trachea. Expression is altered in sld (sublingual gland differentiation arrest) mutants.

It is found in the secreted. Its function is as follows. May function in ocular mucus homeostasis. This chain is Mucin-19 (Muc19), found in Mus musculus (Mouse).